A 645-amino-acid chain; its full sequence is Rab11 family-interacting protein 1 (645 aa).

A C2 domain is found at 1–128; it reads MSLAASAGRG…DQGRRKKQWY (128 aa). Residues 171-187 show a composition bias toward basic and acidic residues; the sequence is PFGKLKDKIKGKNKDSA. A disordered region spans residues 171-215; it reads PFGKLKDKIKGKNKDSASDTASAIVPSVTPSVDSDDESFSKDKKK. S186, S204, S208, and S236 each carry phosphoserine. The interval 259–296 is disordered; that stretch reads WDDDAHEDESSSASDVMSHKRTSSTDQQPNQSNFSLPK. Over residues 282–293 the composition is skewed to polar residues; it reads STDQQPNQSNFS. S301, S316, S340, S342, S344, S346, S357, S358, and S383 each carry phosphoserine. The tract at residues 330–545 is disordered; it reads PEARSEIRES…PRPHPVKPMN (216 aa). Composition is skewed to basic and acidic residues over residues 378-391 and 418-432; these read SDRR…KDSM and AARE…ESKK. Position 434 is a phosphoserine (S434). Over residues 459–487 the composition is skewed to basic and acidic residues; sequence SEKEKERKGALVEAQLREEDLMRRPEKDA. An FIP-RBD domain is found at 573-635; it reads KKYQPSDPAF…EETPNILRVP (63 aa). Residues 581 to 645 are necessary for interaction with RAB4A and RAB11A, subcellular location and endosomal recycling; that stretch reads AFAYAQLTHD…AQMGKKAGKM (65 aa).

As to quaternary structure, homooligomer. Interacts with RAB11A, RAB11B, RAB25, RAB4A and RAB14.

The protein localises to the recycling endosome. Its subcellular location is the cytoplasmic vesicle. Its function is as follows. A Rab11 effector protein involved in the endosomal recycling process. Also involved in controlling membrane trafficking along the phagocytic pathway and in phagocytosis. Interaction with RAB14 may function in the process of neurite formation. The polypeptide is Rab11 family-interacting protein 1 (Rab11fip1) (Mus musculus (Mouse)).